A 328-amino-acid chain; its full sequence is MPLHNLTRFPRLEFIGAPTPLEYLPRFSDYLGREIFIKRDDVTPMAMGGNKLRKLEFLAADALREGADTLITAGAIQSNHVRQTAAVAAKLGLHCVALLENPIGTTAENYLTNGNRLLLDLFNTQIEMCDALTDPNAQLEELATRVEAQGFRPYVIPVGGSNALGALGYVESALEIAQQCEGAVNISSVVVASGSAGTHAGLAVGLEHLMPESELIGVTVSRSVADQLPKVVNLQQAIAKELELTASAEILLWDDYFAPGYGVPNDEGMEAVKLLARLEGILLDPVYTGKAMAGLIDGISQKRFKDEGPILFIHTGGAPALFAYHPHV.

At K51 the chain carries N6-(pyridoxal phosphate)lysine.

The protein belongs to the ACC deaminase/D-cysteine desulfhydrase family. In terms of assembly, homodimer. Requires pyridoxal 5'-phosphate as cofactor.

The catalysed reaction is D-cysteine + H2O = hydrogen sulfide + pyruvate + NH4(+) + H(+). Its function is as follows. Catalyzes the alpha,beta-elimination reaction of D-cysteine and of several D-cysteine derivatives. It could be a defense mechanism against D-cysteine. This chain is D-cysteine desulfhydrase, found in Escherichia coli (strain SMS-3-5 / SECEC).